The chain runs to 196 residues: Ribonuclease HII (196 aa).

The RNase H type-2 domain occupies Ile4–Phe196. Positions 10, 11, and 106 each coordinate a divalent metal cation.

It belongs to the RNase HII family. Requires Mn(2+) as cofactor. The cofactor is Mg(2+).

It is found in the cytoplasm. It carries out the reaction Endonucleolytic cleavage to 5'-phosphomonoester.. In terms of biological role, endonuclease that specifically degrades the RNA of RNA-DNA hybrids. This chain is Ribonuclease HII, found in Polynucleobacter asymbioticus (strain DSM 18221 / CIP 109841 / QLW-P1DMWA-1) (Polynucleobacter necessarius subsp. asymbioticus).